We begin with the raw amino-acid sequence, 540 residues long: MSKEIKFSSDARSAMVRGVDILADTVKVTLGPKGRNVVLEKSFGSPLITNDGVTIAKEIELEDHFENMGAKLVSEVASKTNDIAGDGTTTATVLTQAIVREGIKNVTAGANPIGIRRGIETAVAAAVEALKNNAIPVANKEAIAQVAAVSSRSEKVGEYISEAMEKVGKDGVITIEESRGMETELEVVEGMQFDRGYLSQYMVTDSEKMVADLENPYILITDKKISNIQEILPLLESILQSNRPLLIIADDVDGEALPTLVLNKIRGTFNVVAVKAPGFGDRRKAMLEDIAILTGGTVITEDLGLELKDATIEALGQAARVTVDKDSTVIVEGAGNPEAISNRVAVIKSQIETTTSEFDREKLQERLAKLSGGVAVIKVGAATETELKEMKLRIEDALNATRAAVEEGIVAGGGTALANVIPAVATLELTGDEATGRNIVLRALEEPVRQIAHNAGFEGSIVIDRLKNAELGIGFNAATGEWVNMIDQGIIDPVKVSRSALQNAASVASLILTTEAVVANKPEPVAPAPAMDPSMMGGMM.

Residues 29-32 (TLGP), 86-90 (DGTTT), glycine 413, 476-478 (NAA), and aspartate 492 contribute to the ATP site.

It belongs to the chaperonin (HSP60) family. Forms a cylinder of 14 subunits composed of two heptameric rings stacked back-to-back. Interacts with the co-chaperonin GroES.

The protein localises to the cytoplasm. The catalysed reaction is ATP + H2O + a folded polypeptide = ADP + phosphate + an unfolded polypeptide.. Functionally, together with its co-chaperonin GroES, plays an essential role in assisting protein folding. The GroEL-GroES system forms a nano-cage that allows encapsulation of the non-native substrate proteins and provides a physical environment optimized to promote and accelerate protein folding. The sequence is that of Chaperonin GroEL from Streptococcus pneumoniae (strain Hungary19A-6).